Reading from the N-terminus, the 952-residue chain is Pentatricopeptide repeat-containing protein At5g04810, chloroplastic (952 aa).

Residues 1–60 (MDNGGSVLSLSAPHFPYSATILRRHSPVASISFSLKQPPPQPPEPPESPPDLRRPEKSIG) constitute a chloroplast transit peptide. Disordered regions lie at residues 30–95 (SISF…VSPL) and 115–163 (LRLS…EFRQ). Pro residues predominate over residues 37–49 (QPPPQPPEPPESP). Positions 58 to 68 (SIGSSSSSSSP) are enriched in low complexity. Over residues 122–133 (SPPPPPPPPPPV) the composition is skewed to pro residues. The segment covering 137–163 (TQFRDEFRSDTKPPEEETRNPQQEFRQ) has biased composition (basic and acidic residues). An RRM domain is found at 167–238 (IFVGNLPTWI…VEFHGRILTV (72 aa)). Residues 259–280 (EGEEDTKMSNKSSWHQEREGSR) show a composition bias toward basic and acidic residues. Residues 259–281 (EGEEDTKMSNKSSWHQEREGSRK) are disordered. 15 PPR repeats span residues 308–342 (SRTEFGLMVKFYGRRGDMHRARETFERMRARGITP), 343–377 (TSRIYTSLIHAYAVGRDMDEALSCVRKMKEEGIEM), 378–412 (SLVTYSVIVGGFSKAGHAEAADYWFDEAKRIHKTL), 413–447 (NASIYGKIIYAHCQTCNMERAEALVREMEEEGIDA), 448–482 (PIAIYHTMMDGYTMVADEKKGLVVFKRLKECGFTP), 483–517 (TVVTYGCLINLYTKVGKISKALEVSRVMKEEGVKH), 518–552 (NLKTYSMMINGFVKLKDWANAFAVFEDMVKEGMKP), 553–587 (DVILYNNIISAFCGMGNMDRAIQTVKEMQKLRHRP), 588–622 (TTRTFMPIIHGYAKSGDMRRSLEVFDMMRRCGCVP), 623–657 (TVHTFNGLINGLVEKRQMEKAVEILDEMTLAGVSA), 658–692 (NEHTYTKIMQGYASVGDTGKAFEYFTRLQNEGLDV), 693–727 (DIFTYEALLKACCKSGRMQSALAVTKEMSARNIPR), 728–762 (NSFVYNILIDGWARRGDVWEAADLIQQMKKEGVKP), 763–797 (DIHTYTSFISACSKAGDMNRATQTIEEMEALGVKP), and 798–832 (NIKTYTTLIKGWARASLPEKALSCYEEMKAMGIKP). The segment at 918–952 (DQVSDVDSDEDDVDGEDGEDDEDVNSVSDLLSPYK) is disordered. Acidic residues predominate over residues 921–941 (SDVDSDEDDVDGEDGEDDEDV).

It belongs to the PPR family. P subfamily.

It is found in the plastid. The protein localises to the chloroplast. In terms of biological role, may play a role in the plastid ribosome biogenesis. In Arabidopsis thaliana (Mouse-ear cress), this protein is Pentatricopeptide repeat-containing protein At5g04810, chloroplastic (PPR4).